The primary structure comprises 33 residues: Protamine-2C (33 aa).

Residues methionine 1 to arginine 33 form a disordered region.

As to expression, testis.

It localises to the nucleus. It is found in the chromosome. Protamines substitute for histones in the chromatin of sperm during the haploid phase of spermatogenesis. They compact sperm DNA into a highly condensed, stable and inactive complex. This is Protamine-2C from Oncorhynchus mykiss (Rainbow trout).